Reading from the N-terminus, the 522-residue chain is Probable cytosolic Fe-S cluster assembly factor narfl (522 aa).

Residues cysteine 26, cysteine 73, cysteine 76, cysteine 79, cysteine 205, cysteine 281, cysteine 439, and cysteine 443 each coordinate [4Fe-4S] cluster.

The protein belongs to the NARF family.

Component of the cytosolic iron-sulfur (Fe/S) protein assembly machinery. Required for maturation of extramitochondrial Fe/S proteins. The sequence is that of Probable cytosolic Fe-S cluster assembly factor narfl (narfl) from Dictyostelium discoideum (Social amoeba).